The primary structure comprises 529 residues: Bifunctional purine biosynthesis protein PurH (529 aa).

In terms of domain architecture, MGS-like spans 1–148 (MQQRRPVRRA…KNHKDVAIVV (148 aa)). The residue at position 287 (lysine 287) is an N6-acetyllysine.

It belongs to the PurH family.

It carries out the reaction (6R)-10-formyltetrahydrofolate + 5-amino-1-(5-phospho-beta-D-ribosyl)imidazole-4-carboxamide = 5-formamido-1-(5-phospho-D-ribosyl)imidazole-4-carboxamide + (6S)-5,6,7,8-tetrahydrofolate. The catalysed reaction is IMP + H2O = 5-formamido-1-(5-phospho-D-ribosyl)imidazole-4-carboxamide. It functions in the pathway purine metabolism; IMP biosynthesis via de novo pathway; 5-formamido-1-(5-phospho-D-ribosyl)imidazole-4-carboxamide from 5-amino-1-(5-phospho-D-ribosyl)imidazole-4-carboxamide (10-formyl THF route): step 1/1. The protein operates within purine metabolism; IMP biosynthesis via de novo pathway; IMP from 5-formamido-1-(5-phospho-D-ribosyl)imidazole-4-carboxamide: step 1/1. This Escherichia coli O6:H1 (strain CFT073 / ATCC 700928 / UPEC) protein is Bifunctional purine biosynthesis protein PurH.